A 30-amino-acid chain; its full sequence is Cycloviolacin-O18 (30 aa).

Residues 1 to 30 (GIPCGESCVYIPCTVTALAGCKCKSKVCYN) constitute a cross-link (cyclopeptide (Gly-Asn)). 3 disulfide bridges follow: cysteine 4/cysteine 21, cysteine 8/cysteine 23, and cysteine 13/cysteine 28.

This is a cyclic peptide. In terms of tissue distribution, expressed in leaves, petals and petioles but not in roots and runners (at protein level).

Functionally, probably participates in a plant defense mechanism. This Viola odorata (Sweet violet) protein is Cycloviolacin-O18.